Here is a 364-residue protein sequence, read N- to C-terminus: Aminomethyltransferase (364 aa).

The protein belongs to the GcvT family. As to quaternary structure, the glycine cleavage system is composed of four proteins: P, T, L and H.

It catalyses the reaction N(6)-[(R)-S(8)-aminomethyldihydrolipoyl]-L-lysyl-[protein] + (6S)-5,6,7,8-tetrahydrofolate = N(6)-[(R)-dihydrolipoyl]-L-lysyl-[protein] + (6R)-5,10-methylene-5,6,7,8-tetrahydrofolate + NH4(+). The glycine cleavage system catalyzes the degradation of glycine. This Geobacillus kaustophilus (strain HTA426) protein is Aminomethyltransferase.